A 460-amino-acid polypeptide reads, in one-letter code: MSNILQNRRSSFSSSTKSSLAKRQAPSSSENSVKLMPAMTKKRAPLSNITNQKIASRLQNSDSVHCSNKSAKLKIAPSVCVNASFSSNLQQSIVPHKVASSPSKSDDGSVSMDETRSSSDSYKSPQVEYIENDDVSAVVSIERKALSNLFITPNSETIDNYCSRDVLSDMKKMDKNQIVNIDSNNGDPQLCATFACDIYKHLRASEAKKRPDVDYMERVQKDVNSSMRGILVDWLIEVSEEYRLVPETLYLTVNYIDRYLSGNVISRQKLQLLGVACMMIAAKYEEICAPQVEEFCYITDNTYLKDEVLDMESDVLNYLKFEMTAPTTKCFLRRFVRAAHGVHEAPLMQLECMANYIAELSLLEYTMLSHSPSLVAASAIFLAKYILDPTRRPWNSTLQHYTQYKAMELRGCVKDLQRLCSTAHGSTLPAVREKYSQHKYKFVAKKFCPSVIPQEFFNNS.

Disordered regions lie at residues 1–52 and 95–126; these read MSNI…ITNQ and PHKV…KSPQ. Low complexity-rich tracts occupy residues 10-19 and 100-111; these read SSFSSSTKSS and SSPSKSDDGSVS.

It belongs to the cyclin family. Cyclin AB subfamily. As to quaternary structure, interacts with FZR2/CCS52A1, FZR1/CCS52A2 and FZR3/CCS52B.

The chain is Cyclin-A1-1 (CYCA1-1) from Arabidopsis thaliana (Mouse-ear cress).